The following is a 45-amino-acid chain: Large ribosomal subunit protein bL34 (45 aa).

Residues 1 to 24 (MTKRTFGGTSRKRKRVSGFRVRMR) form a disordered region. Over residues 10 to 24 (SRKRKRVSGFRVRMR) the composition is skewed to basic residues.

Belongs to the bacterial ribosomal protein bL34 family.

This chain is Large ribosomal subunit protein bL34, found in Prochlorococcus marinus (strain MIT 9303).